Reading from the N-terminus, the 932-residue chain is Protocadherin gamma-A2 (932 aa).

The signal sequence occupies residues 1-28 (MAALQKLPHCRKLVLLCFLLATLWEARA). 6 consecutive Cadherin domains span residues 29–133 (GQIR…APRF), 134–242 (GVEE…APVF), 243–347 (TQPE…APEF), 348–452 (YMTS…APAF), 453–562 (SRTS…APEI), and 570–682 (DGST…EPSA). Residues 29-692 (GQIRYSVREE…IPNDSDLTLY (664 aa)) are Extracellular-facing. N-linked (GlcNAc...) asparagine glycosylation is found at Asn-419 and Asn-545. Asn-685 carries an N-linked (GlcNAc...) asparagine glycan. A helical transmembrane segment spans residues 693 to 713 (LVVAVAAVSCVFLAFVIVLLA). Residues 714-932 (HRLRRWHKSR…KKKSGKKEKK (219 aa)) are Cytoplasmic-facing. Disordered regions lie at residues 798-841 (LEEE…WPNN) and 902-932 (ATLT…KEKK). Polar residues predominate over residues 806–841 (FSQQAPPNTDWRFSQAQRPGTSGSQNGDDTGTWPNN). Residues 922-932 (NKKKSGKKEKK) are compositionally biased toward basic residues.

It is found in the cell membrane. Its function is as follows. Potential calcium-dependent cell-adhesion protein. May be involved in the establishment and maintenance of specific neuronal connections in the brain. The polypeptide is Protocadherin gamma-A2 (PCDHGA2) (Homo sapiens (Human)).